The primary structure comprises 20 residues: Brevinin-1ITb (20 aa).

Met8 carries the methionine sulfoxide; partial modification. A disulfide bridge connects residues Cys14 and Cys20.

Belongs to the frog skin active peptide (FSAP) family. Brevinin subfamily. As to expression, expressed by the skin glands.

The protein localises to the secreted. Functionally, antimicrobial peptide. The protein is Brevinin-1ITb of Rana italica (Italian stream frog).